Reading from the N-terminus, the 36-residue chain is Endoglucanase Cel12A (36 aa).

Belongs to the glycosyl hydrolase 12 (cellulase H) family.

The protein localises to the secreted. The protein resides in the extracellular space. The enzyme catalyses Endohydrolysis of (1-&gt;4)-beta-D-glucosidic linkages in cellulose, lichenin and cereal beta-D-glucans.. Has carboxymethylcellulase activity. The sequence is that of Endoglucanase Cel12A from Gloeophyllum trabeum (Brown rot fungus).